The chain runs to 231 residues: uncharacterized protein (231 aa).

10–34 provides a ligand contact to NADP(+); the sequence is VVTGAGSGIGEAIATLLHEEGAKVV. S140 is a binding site for substrate. The Proton acceptor role is filled by Y153.

This sequence belongs to the short-chain dehydrogenases/reductases (SDR) family.

This is an uncharacterized protein from Staphylococcus aureus (strain MRSA252).